The chain runs to 500 residues: NAD(P)H-quinone oxidoreductase chain 4, chloroplastic (500 aa).

Helical transmembrane passes span F4–L24, Y35–F55, I87–V107, F113–S130, L134–M154, F167–L187, I211–H231, H242–V262, A272–A292, I305–D325, G330–G350, L386–T406, I416–M436, and L462–V482.

Belongs to the complex I subunit 4 family.

It localises to the plastid. It is found in the chloroplast thylakoid membrane. The enzyme catalyses a plastoquinone + NADH + (n+1) H(+)(in) = a plastoquinol + NAD(+) + n H(+)(out). It catalyses the reaction a plastoquinone + NADPH + (n+1) H(+)(in) = a plastoquinol + NADP(+) + n H(+)(out). In Arabis hirsuta (Hairy rock-cress), this protein is NAD(P)H-quinone oxidoreductase chain 4, chloroplastic.